The sequence spans 202 residues: Small ribosomal subunit protein uS4c (202 aa).

The S4 RNA-binding domain occupies Met90–Tyr159.

The protein belongs to the universal ribosomal protein uS4 family. Part of the 30S ribosomal subunit. Contacts protein S5. The interaction surface between S4 and S5 is involved in control of translational fidelity.

The protein resides in the plastid. Its subcellular location is the chloroplast. One of the primary rRNA binding proteins, it binds directly to 16S rRNA where it nucleates assembly of the body of the 30S subunit. Functionally, with S5 and S12 plays an important role in translational accuracy. The polypeptide is Small ribosomal subunit protein uS4c (rps4) (Huperzia lucidula (Shining clubmoss)).